Here is a 491-residue protein sequence, read N- to C-terminus: Glycogen synthase (491 aa).

Residue lysine 15 participates in ADP-alpha-D-glucose binding.

Belongs to the glycosyltransferase 1 family. Bacterial/plant glycogen synthase subfamily.

It carries out the reaction [(1-&gt;4)-alpha-D-glucosyl](n) + ADP-alpha-D-glucose = [(1-&gt;4)-alpha-D-glucosyl](n+1) + ADP + H(+). It participates in glycan biosynthesis; glycogen biosynthesis. In terms of biological role, synthesizes alpha-1,4-glucan chains using ADP-glucose. This Hydrogenovibrio crunogenus (strain DSM 25203 / XCL-2) (Thiomicrospira crunogena) protein is Glycogen synthase.